Consider the following 182-residue polypeptide: CDP-diacylglycerol--glycerol-3-phosphate 3-phosphatidyltransferase (182 aa).

Residues 2 to 12 (QFNIPTLLTLF) lie on the Cytoplasmic side of the membrane. A helical transmembrane segment spans residues 13–37 (RVILIPFFVVVFYLPFAWAPMVSAL). The Periplasmic segment spans residues 38 to 60 (IFCIAAITDWFDGFLARRWNQST). A helical transmembrane segment spans residues 61–81 (RFGAFLDPVADKVLVAIAMVL). Residues 82–86 (VTEHY) lie on the Cytoplasmic side of the membrane. A helical transmembrane segment spans residues 87 to 107 (HSWWVTLPAATMIAREIIISA). The Periplasmic portion of the chain corresponds to 108 to 145 (LREWMAELGKRSSVAVSWIGKVKTTAQMVALAWLLWRP). The chain crosses the membrane as a helical span at residues 146 to 168 (NIWVEYAGIALFFVAAVLTLWSM). Residues 169–181 (LQYLSAARGDLLD) are Cytoplasmic-facing.

It belongs to the CDP-alcohol phosphatidyltransferase class-I family.

The protein localises to the cell inner membrane. The catalysed reaction is a CDP-1,2-diacyl-sn-glycerol + sn-glycerol 3-phosphate = a 1,2-diacyl-sn-glycero-3-phospho-(1'-sn-glycero-3'-phosphate) + CMP + H(+). It functions in the pathway phospholipid metabolism; phosphatidylglycerol biosynthesis; phosphatidylglycerol from CDP-diacylglycerol: step 1/2. Its function is as follows. Catalyzes the conversion of cytidine diphosphate diacylglycerol (CDP-DG) and glycerol 3-phosphate into phosphatidylglycerol. Essential for the synthesis of anionic phospholipids, thereby playing a role in balancing the ratio of zwitterionic and anionic phospholipids, which is thought to be important for normal membrane function. This Salmonella paratyphi A (strain ATCC 9150 / SARB42) protein is CDP-diacylglycerol--glycerol-3-phosphate 3-phosphatidyltransferase.